We begin with the raw amino-acid sequence, 87 residues long: U3-theraphotoxin-Hhn1a 7 (87 aa).

The N-terminal stretch at 1-24 is a signal peptide; that stretch reads MVNMKASMFLTFAGLVLLFVVSYA. The propeptide occupies 25–52; the sequence is SESEEKEFPKEMLSSIFAVDNDFKQEER. 3 disulfide bridges follow: Cys-54–Cys-67, Cys-61–Cys-72, and Cys-66–Cys-79.

It belongs to the neurotoxin 10 (Hwtx-1) family. 51 (Hntx-8) subfamily. Hntx-8 sub-subfamily. As to expression, expressed by the venom gland.

The protein localises to the secreted. Functionally, ion channel inhibitor. The protein is U3-theraphotoxin-Hhn1a 7 of Cyriopagopus hainanus (Chinese bird spider).